Consider the following 165-residue polypeptide: Type VI lipase immunity protein Tli3 (165 aa).

A signal peptide spans 1-21 (MKCKTLLIACLFGLGSAQALA).

As to quaternary structure, interacts with the Tle3 toxin.

It is found in the periplasm. Its function is as follows. Immunity protein that neutralizes the toxicity of the P.aeruginosa antibacterial toxin Tle3 in the periplasm to protect the cell from fratricide intoxication. In Pseudomonas aeruginosa (strain ATCC 15692 / DSM 22644 / CIP 104116 / JCM 14847 / LMG 12228 / 1C / PRS 101 / PAO1), this protein is Type VI lipase immunity protein Tli3.